Here is a 573-residue protein sequence, read N- to C-terminus: MANPPHGGILKDLLARDAPRHAELEAEAETLPALLLTERHLCDLELILNGGFSPLEGFMNEKDYNGVVENVRLADGNLFSIPITLDASKETIDGLGLQPGSRVTLRDFRDDRNLAILTIDDIYQPDKQKEAKEVFGGDPEHPAVKYLYDQTNEYYIGGKVEAVNKLNHYDYVGLRFTPAELRLHFDKLGWTRVVAFQTRNPMHRAHRELTVRAARARQANVLIHPVVGLTKPGDIDHFTRVRVYEALLPRYPNGMAVLGLLPLAMRMGGPREAIWHAIIRKNHGATHFIVGRDHAGPGKNSKGEEFYGPYDAQHAVEKYRHELGIEVVEFQQLTYLPDTDEYKPRDEIPAGVKTLDISGTELRKRLRLGTHIPEWFSYPEVVKVLRESNPPRSKQGFTVFLTGYQNSGKAAIARALQVTLNQQGGRSVSLLLGDTVRHELSAELGFSREDRHKNIQRIAFVAAELTKAGAAVIAAPIAPYEESRQQARETISSAGTFFLVHVATSLEYAEKTDKRGVYARARRGEIKGFTGVDDPYETPQKPDITVDIEKQTVRSAVHEIILLLESQGFLEKA.

Positions 1–169 (MANPPHGGIL…VEAVNKLNHY (169 aa)) are N-terminal. Residues 170-394 (DYVGLRFTPA…LRESNPPRSK (225 aa)) are catalytic. Position 197 (glutamine 197) interacts with sulfate. ATP contacts are provided by residues 197-200 (QTRN) and 291-294 (GRDH). Active-site residues include threonine 198, arginine 199, and asparagine 200. Sulfate is bound at residue arginine 199. Alanine 295 contributes to the sulfate binding site. Leucine 333 is an ATP binding site. The tract at residues 395–573 (QGFTVFLTGY…LESQGFLEKA (179 aa)) is allosteric regulation domain; adenylyl-sulfate kinase-like. Residues 434-437 (DTVR), arginine 451, 477-478 (IA), and arginine 515 contribute to the 3'-phosphoadenylyl sulfate site.

The protein in the N-terminal section; belongs to the sulfate adenylyltransferase family. It in the C-terminal section; belongs to the APS kinase family. In terms of assembly, homohexamer. Dimer of trimers.

The protein resides in the cytoplasm. It catalyses the reaction sulfate + ATP + H(+) = adenosine 5'-phosphosulfate + diphosphate. It functions in the pathway sulfur metabolism; hydrogen sulfide biosynthesis; sulfite from sulfate: step 1/3. Its activity is regulated as follows. Allosterically inhibited by 3'-phosphoadenosine 5'-phosphosulfate (PAPS). Its function is as follows. Catalyzes the first intracellular reaction of sulfate assimilation, forming adenosine-5'-phosphosulfate (APS) from inorganic sulfate and ATP. Plays an important role in sulfate activation as a component of the biosynthesis pathway of sulfur-containing amino acids. The chain is Sulfate adenylyltransferase from Coccidioides immitis (strain RS) (Valley fever fungus).